The primary structure comprises 569 residues: Urease subunit alpha (569 aa).

Ni(2+)-binding residues include histidine 136, histidine 138, and lysine 219. At lysine 219 the chain carries N6-carboxylysine. Residue histidine 221 coordinates substrate. Residues histidine 248 and histidine 274 each coordinate Ni(2+). The active-site Proton donor is histidine 322. Residue aspartate 362 participates in Ni(2+) binding.

The protein belongs to the metallo-dependent hydrolases superfamily. Urease alpha subunit family. As to quaternary structure, heterotrimer of UreA (gamma), UreB (beta) and UreC (alpha) subunits. Three heterotrimers associate to form the active enzyme. The cofactor is Ni cation. Carboxylation allows a single lysine to coordinate two nickel ions.

The protein localises to the cytoplasm. The enzyme catalyses urea + 2 H2O + H(+) = hydrogencarbonate + 2 NH4(+). The protein operates within nitrogen metabolism; urea degradation; CO(2) and NH(3) from urea (urease route): step 1/1. The chain is Urease subunit alpha from Microcystis aeruginosa (strain NIES-843 / IAM M-2473).